Here is a 244-residue protein sequence, read N- to C-terminus: 14-3-3 protein beta/alpha (244 aa).

Met-1 is modified (N-acetylmethionine). Ser-184 is subject to Phosphoserine.

It belongs to the 14-3-3 family. Homodimer, and heterodimer with other family members. Phosphorylated.

It is found in the cytoplasm. Its function is as follows. Adapter protein implicated in the regulation of a large spectrum of both general and specialized signaling pathways. Binds to a large number of partners, usually by recognition of a phosphoserine or phosphothreonine motif. Binding generally results in the modulation of the activity of the binding partner. This Gallus gallus (Chicken) protein is 14-3-3 protein beta/alpha (YWHAB).